The primary structure comprises 684 residues: DNA-directed RNA polymerase subunit beta' (684 aa).

The Zn(2+) site is built by cysteine 69, cysteine 71, cysteine 87, and cysteine 90. 3 residues coordinate Mg(2+): aspartate 489, aspartate 491, and aspartate 493.

It belongs to the RNA polymerase beta' chain family. RpoC1 subfamily. In plastids the minimal PEP RNA polymerase catalytic core is composed of four subunits: alpha, beta, beta', and beta''. When a (nuclear-encoded) sigma factor is associated with the core the holoenzyme is formed, which can initiate transcription. Mg(2+) is required as a cofactor. The cofactor is Zn(2+).

The protein localises to the plastid. The protein resides in the chloroplast. The catalysed reaction is RNA(n) + a ribonucleoside 5'-triphosphate = RNA(n+1) + diphosphate. Functionally, DNA-dependent RNA polymerase catalyzes the transcription of DNA into RNA using the four ribonucleoside triphosphates as substrates. The protein is DNA-directed RNA polymerase subunit beta' of Marchantia polymorpha (Common liverwort).